Reading from the N-terminus, the 77-residue chain is Translation initiation factor IF-1, chloroplastic (77 aa).

Residues 1-71 (MKRQKWIHEG…TRGRIIYRLR (71 aa)) enclose the S1-like domain.

Belongs to the IF-1 family. Component of the 30S ribosomal translation pre-initiation complex which assembles on the 30S ribosome in the order IF-2 and IF-3, IF-1 and N-formylmethionyl-tRNA(fMet); mRNA recruitment can occur at any time during PIC assembly.

It is found in the plastid. The protein localises to the chloroplast. In terms of biological role, one of the essential components for the initiation of protein synthesis. Stabilizes the binding of IF-2 and IF-3 on the 30S subunit to which N-formylmethionyl-tRNA(fMet) subsequently binds. Helps modulate mRNA selection, yielding the 30S pre-initiation complex (PIC). Upon addition of the 50S ribosomal subunit IF-1, IF-2 and IF-3 are released leaving the mature 70S translation initiation complex. The polypeptide is Translation initiation factor IF-1, chloroplastic (Leucophyllum frutescens (Texas ranger)).